Here is a 489-residue protein sequence, read N- to C-terminus: Glycogen synthase (489 aa).

Lysine 15 contributes to the ADP-alpha-D-glucose binding site.

Belongs to the glycosyltransferase 1 family. Bacterial/plant glycogen synthase subfamily.

The catalysed reaction is [(1-&gt;4)-alpha-D-glucosyl](n) + ADP-alpha-D-glucose = [(1-&gt;4)-alpha-D-glucosyl](n+1) + ADP + H(+). It functions in the pathway glycan biosynthesis; glycogen biosynthesis. Synthesizes alpha-1,4-glucan chains using ADP-glucose. The chain is Glycogen synthase from Francisella tularensis subsp. holarctica (strain FTNF002-00 / FTA).